The sequence spans 206 residues: Sortase A (206 aa).

The Cytoplasmic segment spans residues 1–6 (MKKWTN). The chain crosses the membrane as a helical span at residues 7 to 24 (RLMTIAGVVLILVAAYLF). Residues 25–206 (AKPHIDNYLH…RKIFVATEVK (182 aa)) are Extracellular-facing. The disordered stretch occupies residues 49–69 (VKEQASKDKKQQAKPQIPKDK). Residues E105, E108, D112, and N114 each coordinate Ca(2+). The active-site Proton donor/acceptor is the H120. Ca(2+) is bound at residue E171. The Acyl-thioester intermediate role is filled by C184.

It belongs to the bacterial sortase family. Class A subfamily. In terms of assembly, monomer and homodimer; in equilibrium.

The protein localises to the cell membrane. The enzyme catalyses The enzyme catalyzes a cell wall sorting reaction in which a surface protein with a sorting signal containing a LPXTG motif is cleaved between the Thr and Gly residue. The resulting threonine carboxyl end of the protein is covalently attached to a pentaglycine cross-bridge of peptidoglycan.. Sortase activity is regulated by monomer-homodimer equilibrium. Mutant cells with monomeric SrtA display more adhesive proteins on the cell surface and are more invasive than wild-type cells, which have majority of SrtA in dimeric form. Dimerization may suppress the enzymatic activity on cell membranes. Stimulated by calcium ions, which promote substrate binding. Calcium ions bind to SrtA and modulate both the structure and dynamics of a large active site loop. Can also be stimulated, to a lesser extent, by Mg(2+) and Mn(2+). Inhibited by sulfhydryl-modifying reagents. In terms of biological role, transpeptidase that anchors surface proteins to the cell wall. Recognizes and modifies its substrate by proteolytic cleavage of a C-terminal sorting signal. Following cleavage, a covalent intermediate is formed via a thioester bond between the sortase and its substrate, which is then transferred and covalently attached to the cell wall. This sortase recognizes a Leu-Pro-x-Thr-Gly (LPXTG) motif, which is cleaved by the sortase between the threonine and glycine residues. Utilizes lipid II as the peptidoglycan substrate for the sorting reaction. Responsible for the display of important virulence factors. Important for interactions with the host and host colonization during infection. The sequence is that of Sortase A from Staphylococcus aureus (strain NCTC 8325 / PS 47).